The sequence spans 81 residues: Exodeoxyribonuclease 7 small subunit (81 aa).

Positions 60–70 (LVDKDGNEKAL) are enriched in basic and acidic residues. Residues 60–81 (LVDKDGNEKALDPQNASAPEEE) are disordered.

The protein belongs to the XseB family. In terms of assembly, heterooligomer composed of large and small subunits.

Its subcellular location is the cytoplasm. It catalyses the reaction Exonucleolytic cleavage in either 5'- to 3'- or 3'- to 5'-direction to yield nucleoside 5'-phosphates.. In terms of biological role, bidirectionally degrades single-stranded DNA into large acid-insoluble oligonucleotides, which are then degraded further into small acid-soluble oligonucleotides. The sequence is that of Exodeoxyribonuclease 7 small subunit from Lactobacillus johnsonii (strain CNCM I-12250 / La1 / NCC 533).